The chain runs to 272 residues: Bis(5'-nucleosyl)-tetraphosphatase, symmetrical (272 aa).

The protein belongs to the Ap4A hydrolase family.

It carries out the reaction P(1),P(4)-bis(5'-adenosyl) tetraphosphate + H2O = 2 ADP + 2 H(+). Its function is as follows. Hydrolyzes diadenosine 5',5'''-P1,P4-tetraphosphate to yield ADP. This Wigglesworthia glossinidia brevipalpis protein is Bis(5'-nucleosyl)-tetraphosphatase, symmetrical.